The primary structure comprises 353 residues: MTDFQETLSSVSKRFLELYRSKILSQWRGTNGSSEEEKRFNSLIQQNGFARQIFGLYKSLCFRYENDAWYSVVLDILDLDLIYSNVDKAVQDNNASDIEYQDYLVKELLRYFKRDFFSWCNKPNCSKCGTDEHLEWVGTDRANSEEAKYQCGNVEVYRCTLTGDITRFPRYNDPIKLLQTRTGRCGEWCNVFTLILKSFGLNARYIWNKEDHVWCEYYSPNLKRWVHLDCCEQSFDEPHIYSKNWNKKMSYVLAFSNDIVADVSGRYILQNNLPRNAISENELNFMCTYLTKTLRKDFNDDQIYALACRDEQERLSLEKTKPSKDTSTTTLTGTKGRESGSTAWKQQRGEDGS.

Residues cysteine 125, cysteine 128, and cysteine 159 each contribute to the Zn(2+) site. Cysteine 185 (nucleophile) is an active-site residue. Active-site residues include histidine 212 and aspartate 229. Glutamate 232 provides a ligand contact to substrate. Residues 316–353 (SLEKTKPSKDTSTTTLTGTKGRESGSTAWKQQRGEDGS) form a disordered region. Residues 325–334 (DTSTTTLTGT) are compositionally biased toward low complexity.

This sequence belongs to the transglutaminase-like superfamily. PNGase family. Zn(2+) serves as cofactor.

Its subcellular location is the cytoplasm. The catalysed reaction is Hydrolysis of an N(4)-(acetyl-beta-D-glucosaminyl)asparagine residue in which the glucosamine residue may be further glycosylated, to yield a (substituted) N-acetyl-beta-D-glucosaminylamine and a peptide containing an aspartate residue.. In terms of biological role, specifically deglycosylates the denatured form of N-linked glycoproteins in the cytoplasm and assists their proteasome-mediated degradation. Cleaves the beta-aspartyl-glucosamine (GlcNAc) of the glycan and the amide side chain of Asn, converting Asn to Asp. Prefers proteins containing high-mannose over those bearing complex type oligosaccharides. Can recognize misfolded proteins in the endoplasmic reticulum that are exported to the cytosol to be destroyed and deglycosylate them, while it has no activity toward native proteins. Deglycosylation is a prerequisite for subsequent proteasome-mediated degradation of some, but not all, misfolded glycoproteins. This chain is Peptide-N(4)-(N-acetyl-beta-glucosaminyl)asparagine amidase (PNG1), found in Kluyveromyces lactis (strain ATCC 8585 / CBS 2359 / DSM 70799 / NBRC 1267 / NRRL Y-1140 / WM37) (Yeast).